The sequence spans 270 residues: Myelin protein zero-like protein 1 (270 aa).

The N-terminal stretch at 1-35 (MAEAVGAVALIAAPARRRWLWSVLAAMLGLLTARI) is a signal peptide. Positions 36–151 (SALEVHTPKE…DIVVRPGHIR (116 aa)) constitute an Ig-like V-type domain. The Extracellular portion of the chain corresponds to 36-162 (SALEVHTPKE…HVVEIDNLLV (127 aa)). 2 N-linked (GlcNAc...) asparagine glycosylation sites follow: Asn50 and Asn130. Cys58 and Cys135 are oxidised to a cystine. The helical transmembrane segment at 163-183 (FLVWVVVGTVTAVVLGLTLLI) threads the bilayer. The Cytoplasmic portion of the chain corresponds to 184 to 270 (SLVLVVLYRR…SVVYADIRKD (87 aa)). The disordered stretch occupies residues 201 to 257 (TGCSTSERLSPVKQAPRKCPSDTEGLVKSPPSAGSHQGPVIYAQLDHSGGHHSGKIN). Phosphoserine occurs at positions 204, 206, 210, and 221. The short motif at 240-245 (VIYAQL) is the ITIM motif 1 element. Phosphotyrosine is present on Tyr242. Ser261 carries the post-translational modification Phosphoserine. Residues 262 to 267 (VVYADI) carry the ITIM motif 2 motif. The residue at position 264 (Tyr264) is a Phosphotyrosine.

Belongs to the myelin P0 protein family. As to quaternary structure, interacts with phosphorylated PTPN11/SHP-2. Phosphorylated on tyrosine residues upon stimulation with pervanadate and concanavalin-A (ConA). Phosphorylation at Tyr-242 and Tyr-264 is required for interaction with PTPN11/SHP-2. Dephosphorylated by PTPN11/SHP-2 (in vitro).

Its subcellular location is the membrane. In terms of biological role, cell surface receptor, which is involved in signal transduction processes. Recruits PTPN11/SHP-2 to the cell membrane and is a putative substrate of PTPN11/SHP-2. Is a major receptor for concanavalin-A (ConA) and is involved in cellular signaling induced by ConA, which probably includes Src family tyrosine-protein kinases. Isoform 2 seems to have a dominant negative role; it blocks tyrosine phosphorylation of MPZL1 induced by ConA. Isoform 1, but not isoform 2, may be involved in regulation of integrin-mediated cell motility. The protein is Myelin protein zero-like protein 1 (Mpzl1) of Mus musculus (Mouse).